Consider the following 688-residue polypeptide: GTPase IMAP family member 8 (688 aa).

Residues 22–44 form a disordered region; that stretch reads TSIGQGERPRASRGQESNFKQSQ. Over residues 35-44 the composition is skewed to polar residues; sequence GQESNFKQSQ. AIG1-type G domains lie at 46-246, 281-471, and 472-681; these read TSTL…TENS, TPEL…VIRE, and KELL…SAVG. The tract at residues 55–62 is G1; it reads GKQGAGKS. GTP-binding positions include 55-63 and serine 76; that span reads GKQGAGKSA. The G2 stretch occupies residues 82–86; it reads MVTKR. The tract at residues 103-106 is G3; that stretch reads DTPD. The segment at 171 to 174 is G4; that stretch reads TRED. GTP-binding positions include 172–174 and asparagine 208; that span reads RED. The G5 stretch occupies residues 207–209; the sequence is NNK.

This sequence belongs to the TRAFAC class TrmE-Era-EngA-EngB-Septin-like GTPase superfamily. AIG1/Toc34/Toc159-like paraseptin GTPase family. IAN subfamily. In terms of tissue distribution, spleen, thymus and T-cells. Greatly reduced in T-cells from lymphopenic rats.

The protein resides in the endoplasmic reticulum. It is found in the golgi apparatus. The protein localises to the mitochondrion. Its subcellular location is the cytoplasm. It localises to the cytosol. Exerts an anti-apoptotic effect in the immune system and is involved in responses to infections. In Rattus norvegicus (Rat), this protein is GTPase IMAP family member 8 (Gimap8).